A 344-amino-acid polypeptide reads, in one-letter code: DnaJ homolog subfamily C member 25 (344 aa).

The helical transmembrane segment at 5-25 (WVLLVALSVLFLSGRAGALTE) threads the bilayer. In terms of domain architecture, J spans 33-108 (VCYDVLGVSR…ETRKDYDYML (76 aa)). Transmembrane regions (helical) follow at residues 134-154 (IVIL…WWSS) and 228-248 (ILLF…SWYV).

This sequence belongs to the DNAJC25 family.

The protein resides in the membrane. The sequence is that of DnaJ homolog subfamily C member 25 (dnajc25) from Xenopus laevis (African clawed frog).